Here is a 373-residue protein sequence, read N- to C-terminus: 3',5'-bisphosphate nucleotidase AHL (373 aa).

Asp52 functions as the Proton acceptor in the catalytic mechanism. Positions 77, 144, 146, and 147 each coordinate Mg(2+). Thr149 acts as the Proton acceptor in catalysis. Adenosine 3',5'-bisphosphate-binding residues include Thr149, Ser281, Lys284, Lys298, and Asp310. AMP is bound by residues Ser281, Lys284, Lys298, and Asp310. Residue Asp310 coordinates Mg(2+).

The protein belongs to the inositol monophosphatase superfamily. The cofactor is Mg(2+). Expressed in roots, leaves, stems, flowers and siliques.

The enzyme catalyses adenosine 3',5'-bisphosphate + H2O = AMP + phosphate. The catalysed reaction is 3'-phosphoadenylyl sulfate + H2O = adenosine 5'-phosphosulfate + phosphate. Inhibited by Li(+) (IC(50)=10 mM), Na(+) (IC(50)=50 mM) and Ca(2+) (IC(50)=0.06 mM). Phosphatase that converts adenosine 3'-phosphate 5'-phosphosulfate (PAPS) to adenosine 5'-phosphosulfate (APS) and 3'-phosphoadenosine 5'-phosphate (3'-PAP) to AMP. May regulate the flux of sulfur in the sulfur-activation pathway by converting PAPS to APS. Prevents both the toxicity of PAP on RNA processing enzymes as well as the product inhibition by PAP of sulfate conjugation. This is 3',5'-bisphosphate nucleotidase AHL from Arabidopsis thaliana (Mouse-ear cress).